The following is a 94-amino-acid chain: Acylphosphatase (94 aa).

Positions 8–94 constitute an Acylphosphatase-like domain; it reads RLTAWVHGRV…REQITGFHER (87 aa). Residues R23 and N41 contribute to the active site.

The protein belongs to the acylphosphatase family.

The enzyme catalyses an acyl phosphate + H2O = a carboxylate + phosphate + H(+). The sequence is that of Acylphosphatase (acyP) from Mycobacterium sp. (strain JLS).